Reading from the N-terminus, the 853-residue chain is Wolframin (853 aa).

A disordered region spans residues 139–179 (KQLERKMRRIYNLQRKRRRRDDDRSSSSSEGEQEPECEPLE). Residues 144 to 157 (KMRRIYNLQRKRRR) are compositionally biased toward basic residues. The span at 169–179 (GEQEPECEPLE) shows a compositional bias: acidic residues. 10 helical membrane passes run 238–258 (MIFHPLIFFTLFYHRLLNLIV), 259–279 (SIPNVIPLSVRCSVLVAISWW), 285–305 (LPLVSYYLSLGIMIWATCKML), 347–367 (LYFFCAFICNLIVYPLVTDAW), 373–393 (LTIISGALTFITMCVSMYASS), 446–466 (FCLNCRTALYLFIPVLLIMMA), 473–493 (GVYTFLIPHCVTLSWLQVCIA), 513–533 (IVLFLPLFGIVALLVPVFVAI), 545–565 (WGSTALACGLVVVLSCILALN), and 572–592 (ITMLQLITAITTACLLVLPYM). N-linked (GlcNAc...) asparagine glycosylation is found at N694 and N769.

In terms of tissue distribution, detected in adult brain.

The protein localises to the membrane. It is found in the endoplasmic reticulum. Its subcellular location is the mitochondrion. In terms of biological role, participates in the regulation of cellular Ca(2+) homeostasis, at least partly, by modulating the filling state of the endoplasmic reticulum Ca(2+) store. In neurons and glial cells, has a role in maintaining neuronal function and integrity during aging. The polypeptide is Wolframin (Drosophila melanogaster (Fruit fly)).